We begin with the raw amino-acid sequence, 172 residues long: Transmembrane protein 91 (172 aa).

At 1 to 97 (MDNSSIQELQ…SPLLPHDHLG (97 aa)) the chain is on the extracellular side. The interval 60-86 (GLGEPETPDFEDTLSSDSDSDDDGGDR) is disordered. The segment covering 65-83 (ETPDFEDTLSSDSDSDDDG) has biased composition (acidic residues). The helical transmembrane segment at 98-118 (LAVFSVLCCFWPVGIAAFCLA) threads the bilayer. The Cytoplasmic portion of the chain corresponds to 119–139 (HKTNKAWAKGDVQGAGAASRR). A helical transmembrane segment spans residues 140–160 (AFLLGVLAVGLGLCTYAAALV). Topologically, residues 161–172 (TLAAYLASRDPP) are extracellular.

Belongs to the CD225/Dispanin family.

It localises to the membrane. The chain is Transmembrane protein 91 (Tmem91) from Mus musculus (Mouse).